A 309-amino-acid polypeptide reads, in one-letter code: Methionyl-tRNA formyltransferase (309 aa).

Ser-110–Pro-113 is a binding site for (6S)-5,6,7,8-tetrahydrofolate. Residues Lys-289–Lys-309 are disordered. The span at Arg-298–Lys-309 shows a compositional bias: basic and acidic residues.

Belongs to the Fmt family.

The enzyme catalyses L-methionyl-tRNA(fMet) + (6R)-10-formyltetrahydrofolate = N-formyl-L-methionyl-tRNA(fMet) + (6S)-5,6,7,8-tetrahydrofolate + H(+). Functionally, attaches a formyl group to the free amino group of methionyl-tRNA(fMet). The formyl group appears to play a dual role in the initiator identity of N-formylmethionyl-tRNA by promoting its recognition by IF2 and preventing the misappropriation of this tRNA by the elongation apparatus. In Saccharopolyspora erythraea (strain ATCC 11635 / DSM 40517 / JCM 4748 / NBRC 13426 / NCIMB 8594 / NRRL 2338), this protein is Methionyl-tRNA formyltransferase.